An 87-amino-acid chain; its full sequence is Omega-lycotoxin-Am1d (87 aa).

The signal sequence occupies residues 1 to 17 (MKLSIFFVLFFIAIAYC). Residues 18-40 (QPEFLDDEEDEVEETLPVAEEGR) constitute a propeptide that is removed on maturation. 4 cysteine pairs are disulfide-bonded: Cys44–Cys59, Cys51–Cys64, Cys58–Cys84, and Cys66–Cys82.

Belongs to the neurotoxin omega-lctx family. As to expression, expressed by the venom gland.

The protein resides in the secreted. In terms of biological role, modulates Cav2.1/CACNA1A voltage-gated calcium channels (P/Q-type currents) in rat cerebellar Purkinje cells and hippocampal CA1-CA3 neurons. At saturating concentrations (&gt;10 nM) decelerates activation kinetics and slightly increases peak amplitude without affecting deactivation kinetics. In vivo, does not cause death when intravenously injected into mice. In rat models, through its activity on Cav2.1/CACNA1A, has an ameliorative effect on memory defects provoked by hyperstimulation of N-methyl-D-aspartate receptors (NMDARs) in the hippocampus. This Alopecosa marikovskyi (Wolf spider) protein is Omega-lycotoxin-Am1d.